The primary structure comprises 448 residues: Acetate kinase (448 aa).

Residue asparagine 7 participates in Mg(2+) binding. Residue lysine 14 coordinates ATP. A substrate-binding site is contributed by arginine 91. The active-site Proton donor/acceptor is the aspartate 148. ATP is bound by residues 208 to 212 (HIGNG) and 283 to 285 (DRR). Residue glutamate 388 participates in Mg(2+) binding.

This sequence belongs to the acetokinase family. As to quaternary structure, homodimer. Requires Mg(2+) as cofactor. The cofactor is Mn(2+).

It localises to the cytoplasm. The catalysed reaction is acetate + ATP = acetyl phosphate + ADP. It participates in metabolic intermediate biosynthesis; acetyl-CoA biosynthesis; acetyl-CoA from acetate: step 1/2. In terms of biological role, catalyzes the formation of acetyl phosphate from acetate and ATP. Can also catalyze the reverse reaction. The polypeptide is Acetate kinase (Treponema pallidum (strain Nichols)).